A 344-amino-acid chain; its full sequence is Protease HtpX homolog (344 aa).

3 helical membrane passes run 8 to 28 (VALGLYMLGYLFMFVIAATVA), 46 to 66 (ALTGVMIVLTTAFVIYLFVLV), and 74 to 94 (VSFLVGLIAFVVLMNLLTYVA). H172 contributes to the Zn(2+) binding site. The active site involves E173. A Zn(2+)-binding site is contributed by H176. Helical transmembrane passes span 183–203 (AIMLLFGVLPSVVYYLGVTAV) and 220–240 (LAVGVVAVLASFLIQLLVLAF). E245 contributes to the Zn(2+) binding site.

The protein belongs to the peptidase M48B family. Zn(2+) is required as a cofactor.

The protein localises to the cell membrane. The polypeptide is Protease HtpX homolog (Pyrobaculum calidifontis (strain DSM 21063 / JCM 11548 / VA1)).